A 498-amino-acid polypeptide reads, in one-letter code: ATP synthase subunit beta, chloroplastic (498 aa).

The residue at position 6 (threonine 6) is a Phosphothreonine. The residue at position 13 (serine 13) is a Phosphoserine. An ATP-binding site is contributed by 172–179 (GGAGVGKT).

Belongs to the ATPase alpha/beta chains family. F-type ATPases have 2 components, CF(1) - the catalytic core - and CF(0) - the membrane proton channel. CF(1) has five subunits: alpha(3), beta(3), gamma(1), delta(1), epsilon(1). CF(0) has four main subunits: a(1), b(1), b'(1) and c(9-12).

Its subcellular location is the plastid. It is found in the chloroplast thylakoid membrane. It carries out the reaction ATP + H2O + 4 H(+)(in) = ADP + phosphate + 5 H(+)(out). In terms of biological role, produces ATP from ADP in the presence of a proton gradient across the membrane. The catalytic sites are hosted primarily by the beta subunits. This is ATP synthase subunit beta, chloroplastic from Draba nemorosa (Woodland whitlowgrass).